The primary structure comprises 213 residues: Glycerol-3-phosphate acyltransferase (213 aa).

5 helical membrane-spanning segments follow: residues 3–23 (ILLAALVAYLIGSVSFAVVVS), 51–71 (KAAILTLVGDAFKGWIAVWLA), 78–98 (DVAIAWVAIAVFLGHLYPVFF), 115–135 (AVHPVLGLATALTWLIVAFFF), and 140–160 (LAALVAAVFAPVFDVFLFGMP).

This sequence belongs to the PlsY family. Probably interacts with PlsX.

The protein localises to the cell inner membrane. The enzyme catalyses an acyl phosphate + sn-glycerol 3-phosphate = a 1-acyl-sn-glycero-3-phosphate + phosphate. The protein operates within lipid metabolism; phospholipid metabolism. Functionally, catalyzes the transfer of an acyl group from acyl-phosphate (acyl-PO(4)) to glycerol-3-phosphate (G3P) to form lysophosphatidic acid (LPA). This enzyme utilizes acyl-phosphate as fatty acyl donor, but not acyl-CoA or acyl-ACP. The sequence is that of Glycerol-3-phosphate acyltransferase from Burkholderia cenocepacia (strain HI2424).